Consider the following 231-residue polypeptide: Probable methylthioribulose-1-phosphate dehydratase (231 aa).

Substrate is bound at residue cysteine 90. The Zn(2+) site is built by histidine 108 and histidine 110. Residue glutamate 132 is the Proton donor/acceptor of the active site. Position 188 (histidine 188) interacts with Zn(2+).

Belongs to the aldolase class II family. MtnB subfamily. The cofactor is Zn(2+).

The protein localises to the cytoplasm. The catalysed reaction is 5-(methylsulfanyl)-D-ribulose 1-phosphate = 5-methylsulfanyl-2,3-dioxopentyl phosphate + H2O. It participates in amino-acid biosynthesis; L-methionine biosynthesis via salvage pathway; L-methionine from S-methyl-5-thio-alpha-D-ribose 1-phosphate: step 2/6. In terms of biological role, catalyzes the dehydration of methylthioribulose-1-phosphate (MTRu-1-P) into 2,3-diketo-5-methylthiopentyl-1-phosphate (DK-MTP-1-P). This chain is Probable methylthioribulose-1-phosphate dehydratase, found in Anopheles gambiae (African malaria mosquito).